The sequence spans 588 residues: 2-isopropylmalate synthase (588 aa).

The Pyruvate carboxyltransferase domain occupies 40–314 (PRWCAVDLRD…DPQIDFSDLD (275 aa)). Mg(2+)-binding residues include Asp-49, His-253, His-255, and Asn-289. The tract at residues 456 to 588 (APLDRVEEKW…TVREPELAAV (133 aa)) is regulatory domain.

The protein belongs to the alpha-IPM synthase/homocitrate synthase family. LeuA type 2 subfamily. Homodimer. Requires Mg(2+) as cofactor.

The protein localises to the cytoplasm. It carries out the reaction 3-methyl-2-oxobutanoate + acetyl-CoA + H2O = (2S)-2-isopropylmalate + CoA + H(+). It functions in the pathway amino-acid biosynthesis; L-leucine biosynthesis; L-leucine from 3-methyl-2-oxobutanoate: step 1/4. In terms of biological role, catalyzes the condensation of the acetyl group of acetyl-CoA with 3-methyl-2-oxobutanoate (2-ketoisovalerate) to form 3-carboxy-3-hydroxy-4-methylpentanoate (2-isopropylmalate). This is 2-isopropylmalate synthase from Clavibacter sepedonicus (Clavibacter michiganensis subsp. sepedonicus).